A 32-amino-acid polypeptide reads, in one-letter code: MPILVWQLPKSKKLKTLKYRICFREFFDRVET.

This is an uncharacterized protein from Saccharomyces cerevisiae (strain ATCC 204508 / S288c) (Baker's yeast).